We begin with the raw amino-acid sequence, 125 residues long: Large ribosomal subunit protein bL12 (125 aa).

Belongs to the bacterial ribosomal protein bL12 family. As to quaternary structure, homodimer. Part of the ribosomal stalk of the 50S ribosomal subunit. Forms a multimeric L10(L12)X complex, where L10 forms an elongated spine to which 2 to 4 L12 dimers bind in a sequential fashion. Binds GTP-bound translation factors.

Forms part of the ribosomal stalk which helps the ribosome interact with GTP-bound translation factors. Is thus essential for accurate translation. The protein is Large ribosomal subunit protein bL12 of Variovorax paradoxus (strain S110).